The primary structure comprises 288 residues: Bifunctional protein FolD (288 aa).

NADP(+) contacts are provided by residues 166 to 168, serine 191, and isoleucine 232; that span reads GRS.

This sequence belongs to the tetrahydrofolate dehydrogenase/cyclohydrolase family. Homodimer.

It carries out the reaction (6R)-5,10-methylene-5,6,7,8-tetrahydrofolate + NADP(+) = (6R)-5,10-methenyltetrahydrofolate + NADPH. It catalyses the reaction (6R)-5,10-methenyltetrahydrofolate + H2O = (6R)-10-formyltetrahydrofolate + H(+). It functions in the pathway one-carbon metabolism; tetrahydrofolate interconversion. In terms of biological role, catalyzes the oxidation of 5,10-methylenetetrahydrofolate to 5,10-methenyltetrahydrofolate and then the hydrolysis of 5,10-methenyltetrahydrofolate to 10-formyltetrahydrofolate. In Rickettsia africae (strain ESF-5), this protein is Bifunctional protein FolD.